The chain runs to 217 residues: D-glycero-beta-D-manno-heptose-1,7-bisphosphate 7-phosphatase (217 aa).

Residue Asp-36 is the Nucleophile of the active site. Positions 36 and 38 each coordinate Mg(2+). Substrate contacts are provided by residues 36-38 (DRD), 44-47 (DTDY), 78-81 (TNQS), and 135-136 (RK). Residue Asp-38 is the Proton donor of the active site. Mg(2+) contacts are provided by Asp-161 and Lys-162. Lys-162 provides a ligand contact to substrate.

It belongs to the gmhB family. As to quaternary structure, monomer. It depends on Mg(2+) as a cofactor.

It is found in the cytoplasm. It catalyses the reaction D-glycero-beta-D-manno-heptose 1,7-bisphosphate + H2O = D-glycero-beta-D-manno-heptose 1-phosphate + phosphate. It participates in nucleotide-sugar biosynthesis; ADP-L-glycero-beta-D-manno-heptose biosynthesis; ADP-L-glycero-beta-D-manno-heptose from D-glycero-beta-D-manno-heptose 7-phosphate: step 2/4. Functionally, converts the D-glycero-beta-D-manno-heptose 1,7-bisphosphate (beta-HBP) intermediate into D-glycero-beta-D-manno-heptose 1-phosphate by removing the phosphate group at the C-7 position. This Mesorhizobium japonicum (strain LMG 29417 / CECT 9101 / MAFF 303099) (Mesorhizobium loti (strain MAFF 303099)) protein is D-glycero-beta-D-manno-heptose-1,7-bisphosphate 7-phosphatase (gmhB).